The sequence spans 131 residues: Ribosome-binding factor A (131 aa).

It belongs to the RbfA family. As to quaternary structure, monomer. Binds 30S ribosomal subunits, but not 50S ribosomal subunits or 70S ribosomes.

The protein localises to the cytoplasm. In terms of biological role, one of several proteins that assist in the late maturation steps of the functional core of the 30S ribosomal subunit. Associates with free 30S ribosomal subunits (but not with 30S subunits that are part of 70S ribosomes or polysomes). Required for efficient processing of 16S rRNA. May interact with the 5'-terminal helix region of 16S rRNA. The protein is Ribosome-binding factor A of Chromohalobacter salexigens (strain ATCC BAA-138 / DSM 3043 / CIP 106854 / NCIMB 13768 / 1H11).